Consider the following 206-residue polypeptide: Large ribosomal subunit protein eL13z (206 aa).

The tract at residues 183-206 (ERTNKRHAGARAKRAADAEKEEKK) is disordered. A compositionally biased stretch (basic residues) spans 186–195 (NKRHAGARAK). The span at 196-206 (RAADAEKEEKK) shows a compositional bias: basic and acidic residues.

Belongs to the eukaryotic ribosomal protein eL13 family.

This Brassica napus (Rape) protein is Large ribosomal subunit protein eL13z.